The chain runs to 623 residues: Glutathione import ATP-binding protein GsiA (623 aa).

2 consecutive ABC transporter domains span residues Val15–Leu269 and Leu314–Leu564. ATP-binding positions include Gly49–Ser56 and Gly357–Ser364.

It belongs to the ABC transporter superfamily. Glutathione importer (TC 3.A.1.5.11) family. As to quaternary structure, the complex is composed of two ATP-binding proteins (GsiA), two transmembrane proteins (GsiC and GsiD) and a solute-binding protein (GsiB).

The protein localises to the cell inner membrane. The enzyme catalyses glutathione(out) + ATP + H2O = glutathione(in) + ADP + phosphate + H(+). Part of the ABC transporter complex GsiABCD involved in glutathione import. Responsible for energy coupling to the transport system. This chain is Glutathione import ATP-binding protein GsiA, found in Escherichia coli O157:H7.